Reading from the N-terminus, the 361-residue chain is Phosphate acyltransferase (361 aa).

This sequence belongs to the PlsX family. As to quaternary structure, homodimer. Probably interacts with PlsY.

The protein resides in the cytoplasm. The enzyme catalyses a fatty acyl-[ACP] + phosphate = an acyl phosphate + holo-[ACP]. It functions in the pathway lipid metabolism; phospholipid metabolism. Catalyzes the reversible formation of acyl-phosphate (acyl-PO(4)) from acyl-[acyl-carrier-protein] (acyl-ACP). This enzyme utilizes acyl-ACP as fatty acyl donor, but not acyl-CoA. The sequence is that of Phosphate acyltransferase from Anaeromyxobacter dehalogenans (strain 2CP-C).